The following is a 384-amino-acid chain: Cobalt-precorrin-5B C(1)-methyltransferase (384 aa).

The protein belongs to the CbiD family.

The enzyme catalyses Co-precorrin-5B + S-adenosyl-L-methionine = Co-precorrin-6A + S-adenosyl-L-homocysteine. It functions in the pathway cofactor biosynthesis; adenosylcobalamin biosynthesis; cob(II)yrinate a,c-diamide from sirohydrochlorin (anaerobic route): step 6/10. Catalyzes the methylation of C-1 in cobalt-precorrin-5B to form cobalt-precorrin-6A. This is Cobalt-precorrin-5B C(1)-methyltransferase from Ruminiclostridium cellulolyticum (strain ATCC 35319 / DSM 5812 / JCM 6584 / H10) (Clostridium cellulolyticum).